A 405-amino-acid polypeptide reads, in one-letter code: Deoxyguanosinetriphosphate triphosphohydrolase-like protein (405 aa).

Positions 75–219 (RLTHTIEVAQ…AAIADDIAYN (145 aa)) constitute an HD domain.

This sequence belongs to the dGTPase family. Type 2 subfamily.

This chain is Deoxyguanosinetriphosphate triphosphohydrolase-like protein, found in Rhizobium etli (strain CIAT 652).